Here is a 123-residue protein sequence, read N- to C-terminus: Putative EG45-like domain containing protein 1 (123 aa).

The N-terminal stretch at 1–21 is a signal peptide; it reads MSKSIVFFSTVLVFLFSFSYA. Residues 24-123 form the Expansin-like EG45 domain; that stretch reads GIATFYTSYT…AGIINIDYFP (100 aa).

Its subcellular location is the secreted. Might have a systemic role in water and solute homeostasis. The chain is Putative EG45-like domain containing protein 1 (EGC1) from Arabidopsis thaliana (Mouse-ear cress).